Consider the following 336-residue polypeptide: 3-isopropylmalate dehydrogenase (336 aa).

Residues arginine 87, arginine 97, arginine 121, and aspartate 211 each coordinate substrate. Mg(2+)-binding residues include aspartate 211, aspartate 235, and aspartate 239. Residue 271-283 (GSAPDIAGQGIAD) coordinates NAD(+).

The protein belongs to the isocitrate and isopropylmalate dehydrogenases family. LeuB type 2 subfamily. As to quaternary structure, homodimer. Requires Mg(2+) as cofactor. Mn(2+) serves as cofactor.

The protein localises to the cytoplasm. It carries out the reaction (2R,3S)-3-isopropylmalate + NAD(+) = 4-methyl-2-oxopentanoate + CO2 + NADH. It functions in the pathway amino-acid biosynthesis; L-leucine biosynthesis; L-leucine from 3-methyl-2-oxobutanoate: step 3/4. Functionally, catalyzes the oxidation of 3-carboxy-2-hydroxy-4-methylpentanoate (3-isopropylmalate) to 3-carboxy-4-methyl-2-oxopentanoate. The product decarboxylates to 4-methyl-2 oxopentanoate. The sequence is that of 3-isopropylmalate dehydrogenase from Mycolicibacterium vanbaalenii (strain DSM 7251 / JCM 13017 / BCRC 16820 / KCTC 9966 / NRRL B-24157 / PYR-1) (Mycobacterium vanbaalenii).